A 502-amino-acid polypeptide reads, in one-letter code: Zinc finger protein 3 homolog (502 aa).

Basic and acidic residues-rich tracts occupy residues 1-13 (MGTE…PKEE) and 80-93 (PSSE…ESER). 2 disordered regions span residues 1 to 26 (MGTE…SLLE) and 47 to 103 (LEGH…NLVT). Glycyl lysine isopeptide (Lys-Gly) (interchain with G-Cter in SUMO2) cross-links involve residues Lys6 and Lys11. C2H2-type zinc fingers lie at residues 141–163 (HTCK…MRVH), 169–191 (FECK…LRIH), 197–219 (FACN…HRIH), 225–247 (YKCE…QRIH), 253–275 (YECN…QRIH), 281–303 (HECN…QKIH), 309–331 (YLCN…QRIH), 337–359 (YECN…IRIH), 365–387 (YVCK…ERIH), 393–415 (YECF…QRIH), 421–443 (HQCN…QKIH), 449–471 (YECS…QRIH), and 477–499 (YECQ…QSVH).

Belongs to the krueppel C2H2-type zinc-finger protein family.

Its subcellular location is the nucleus. Its function is as follows. May be involved in transcriptional regulation. This is Zinc finger protein 3 homolog (ZFP3) from Homo sapiens (Human).